A 168-amino-acid polypeptide reads, in one-letter code: Diphosphoinositol polyphosphate phosphohydrolase 1 (168 aa).

Met1 is modified (N-acetylmethionine). Residues Arg10, Lys18–Arg20, and Ser39–Arg41 contribute to the substrate site. In terms of domain architecture, Nudix hydrolase spans Tyr17 to Arg144. Mg(2+) is bound by residues Gly50 and Glu66. The Nudix box signature appears at Gly51–Gly72. Catalysis depends on Glu69, which acts as the Proton acceptor. Glu70 contacts Mg(2+). Residues Arg89 to His91, Arg115, and Lys133 each bind substrate.

It belongs to the Nudix hydrolase family. DIPP subfamily. In terms of assembly, monomer. It depends on Mg(2+) as a cofactor. Requires Mn(2+) as cofactor. The cofactor is Zn(2+). Present in heart, lung, liver and spleen (at protein level). Widely expressed.

The protein resides in the cytoplasm. It localises to the nucleus. It carries out the reaction diphospho-myo-inositol polyphosphate + H2O = myo-inositol polyphosphate + phosphate.. The catalysed reaction is 5-diphospho-1D-myo-inositol 1,2,3,4,6-pentakisphosphate + H2O = 1D-myo-inositol hexakisphosphate + phosphate + H(+). The enzyme catalyses 3,5-bis(diphospho)-1D-myo-inositol 1,2,4,6-tetrakisphosphate + H2O = 3-diphospho-1D-myo-inositol 1,2,4,5,6-pentakisphosphate + phosphate + 2 H(+). It catalyses the reaction [phosphate](n+1) + n H2O = (n+1) phosphate + n H(+). It carries out the reaction P(1),P(5)-bis(5'-adenosyl) pentaphosphate + H2O = ADP + ATP + 2 H(+). The catalysed reaction is P(1),P(6)-bis(5'-adenosyl) hexaphosphate + H2O = 2 ATP + 2 H(+). The enzyme catalyses P(1),P(4)-bis(5'-adenosyl) tetraphosphate + H2O = AMP + ATP + 2 H(+). It catalyses the reaction a 5'-end (N(7)-methyl 5'-triphosphoguanosine)-ribonucleoside in mRNA + H2O = N(7)-methyl-GMP + a 5'-end diphospho-ribonucleoside in mRNA + 2 H(+). It carries out the reaction a 5'-end (N(7)-methyl 5'-triphosphoguanosine)-ribonucleoside in mRNA + H2O = N(7)-methyl-GDP + a 5'-end phospho-ribonucleoside in mRNA + 2 H(+). In terms of biological role, cleaves a beta-phosphate from the diphosphate groups in PP-InsP5 (diphosphoinositol pentakisphosphate) and [PP]2-InsP4 (bisdiphosphoinositol tetrakisphosphate), suggesting that it may play a role in signal transduction. InsP6 (inositol hexakisphosphate) is not a substrate. Also able to catalyze the hydrolysis of dinucleoside oligophosphates, with diadenosine 5',5'''-P1,P6-hexaphosphate (Ap6A) and diadenosine 5',5'''- P1,P5-pentaphosphate (Ap5A) being the preferred substrates. The major reaction products are ADP and p4a from Ap6A and ADP and ATP from Ap5A. Also able to hydrolyze 5- phosphoribose 1-diphosphate. Acts as a negative regulator of the ERK1/2 pathway. Acts as a decapping enzyme that can hydrolyze both monomethylated and unmethylated capped RNAs. Hydrolyzes monomethylated capped RNA after both the alpha- and beta-phosphates generating m7GMP + ppRNA and m7GDP + pRNA. Modulates the stability of a subset of mRNAs implicated in cell motility. Divalent cations zinc, magnesium and manganese determine its substrate specificity. Exhibits diphosphoinositol polyphosphate phosphohydrolase in the presence of magnesium ions, diadenosine hexaphosphate hydrolase activity in the presence of manganese ions and endopolyphosphatase activity in the presence of zinc ions. Plays an important role in limiting DNA damage and maintaining cell survival upon oxidative stress via its endopolyphosphatase activity. The protein is Diphosphoinositol polyphosphate phosphohydrolase 1 of Mus musculus (Mouse).